A 158-amino-acid chain; its full sequence is Ankyrin repeat domain-containing protein 37 (158 aa).

3 ANK repeats span residues 1-25 (MLLL…SVNA), 30-59 (CEQS…DLNQ), and 63-92 (FGEA…QIDL). Positions 129–149 (EQPNKDHCVQVLRLKRSFGSE) match the Nuclear localization signal motif.

In terms of processing, ubiquitinated by the CRL2(FEM1B) complex, leading to its degradation.

Its subcellular location is the nucleus. It localises to the cytoplasm. This Bos taurus (Bovine) protein is Ankyrin repeat domain-containing protein 37 (ANKRD37).